The sequence spans 1247 residues: Respiratory nitrate reductase 1 alpha chain (1247 aa).

The 65-residue stretch at 43 to 107 (DKIVRSTHGV…SYSWYLYSAN (65 aa)) folds into the 4Fe-4S Mo/W bis-MGD-type domain. [4Fe-4S] cluster is bound by residues His-50, Cys-54, Cys-58, and Cys-93. Asp-223 lines the Mo-bis(molybdopterin guanine dinucleotide) pocket.

The protein belongs to the prokaryotic molybdopterin-containing oxidoreductase family. In terms of assembly, dimer of heterotrimers each composed of an alpha, a beta and a gamma chain. Alpha and beta are catalytic chains; gamma chains are involved in binding the enzyme complex to the cytoplasmic membrane. Interacts with the NarJ chaperone. [4Fe-4S] cluster is required as a cofactor. Mo-bis(molybdopterin guanine dinucleotide) serves as cofactor.

It localises to the cell membrane. It carries out the reaction nitrate + a quinol = a quinone + nitrite + H2O. Its function is as follows. The nitrate reductase enzyme complex allows E.coli to use nitrate as an electron acceptor during anaerobic growth. The alpha chain is the actual site of nitrate reduction. This chain is Respiratory nitrate reductase 1 alpha chain (narG), found in Escherichia coli (strain K12).